Consider the following 407-residue polypeptide: Probable tRNA sulfurtransferase (407 aa).

The region spanning 61 to 165 (NEITYRLSKI…LDAIYMYEEV (105 aa)) is the THUMP domain. Residues 183–184 (ML), 208–209 (HF), arginine 265, glycine 287, and glutamine 296 contribute to the ATP site.

Belongs to the ThiI family.

Its subcellular location is the cytoplasm. The enzyme catalyses [ThiI sulfur-carrier protein]-S-sulfanyl-L-cysteine + a uridine in tRNA + 2 reduced [2Fe-2S]-[ferredoxin] + ATP + H(+) = [ThiI sulfur-carrier protein]-L-cysteine + a 4-thiouridine in tRNA + 2 oxidized [2Fe-2S]-[ferredoxin] + AMP + diphosphate. It catalyses the reaction [ThiS sulfur-carrier protein]-C-terminal Gly-Gly-AMP + S-sulfanyl-L-cysteinyl-[cysteine desulfurase] + AH2 = [ThiS sulfur-carrier protein]-C-terminal-Gly-aminoethanethioate + L-cysteinyl-[cysteine desulfurase] + A + AMP + 2 H(+). The protein operates within cofactor biosynthesis; thiamine diphosphate biosynthesis. Its function is as follows. Catalyzes the ATP-dependent transfer of a sulfur to tRNA to produce 4-thiouridine in position 8 of tRNAs, which functions as a near-UV photosensor. Also catalyzes the transfer of sulfur to the sulfur carrier protein ThiS, forming ThiS-thiocarboxylate. This is a step in the synthesis of thiazole, in the thiamine biosynthesis pathway. The sulfur is donated as persulfide by IscS. This Staphylococcus aureus (strain MSSA476) protein is Probable tRNA sulfurtransferase.